A 100-amino-acid chain; its full sequence is uncharacterized protein (100 aa).

Residues 68–91 (EQYASGAGEKRKEQSSGNSRRKDP) are compositionally biased toward basic and acidic residues. The disordered stretch occupies residues 68–100 (EQYASGAGEKRKEQSSGNSRRKDPSLYNWSDVK).

This sequence belongs to the chlamydial CPn_0121/CT_031/TC_0300 family.

This is an uncharacterized protein from Chlamydia muridarum (strain MoPn / Nigg).